Consider the following 329-residue polypeptide: Peroxidase 18 (329 aa).

Positions 1–29 are cleaved as a signal peptide; that stretch reads MALQFFSCKPKYTFLSSLLLLLLLSSSVA. 4 disulfide bridges follow: C40-C116, C73-C78, C122-C325, and C201-C235. H71 acts as the Proton acceptor in catalysis. D72, V75, G77, D79, and S81 together coordinate Ca(2+). A glycan (N-linked (GlcNAc...) asparagine) is linked at N87. Residue I164 participates in substrate binding. H194 contacts heme b. T195 lines the Ca(2+) pocket. The Ca(2+) site is built by D249, T252, and D257.

Belongs to the peroxidase family. Classical plant (class III) peroxidase subfamily. Heme b is required as a cofactor. Requires Ca(2+) as cofactor.

The protein resides in the secreted. It carries out the reaction 2 a phenolic donor + H2O2 = 2 a phenolic radical donor + 2 H2O. In terms of biological role, removal of H(2)O(2), oxidation of toxic reductants, biosynthesis and degradation of lignin, suberization, auxin catabolism, response to environmental stresses such as wounding, pathogen attack and oxidative stress. These functions might be dependent on each isozyme/isoform in each plant tissue. The protein is Peroxidase 18 (PER18) of Arabidopsis thaliana (Mouse-ear cress).